A 303-amino-acid polypeptide reads, in one-letter code: Trans-enoyl reductase tazE (303 aa).

A disordered region spans residues 1–26 (MTAEHDAAILPKPGGPLAVGKRATPE). Position 44–49 (44–49 (CDYYQR)) interacts with NADP(+). 136 to 143 (LAVLTALT) lines the substrate pocket. NADP(+) contacts are provided by residues 170–173 (SSSV), 193–196 (SPKH), Tyr211, and 246–247 (LD). 265–269 (VLPEC) is a binding site for substrate.

It belongs to the zinc-containing alcohol dehydrogenase family.

Its pathway is secondary metabolite biosynthesis. Trans-enoyl reductase; part of the gene cluster that mediates the biosynthesis of azaterrilone A and other azaphilones, a class of fungal metabolites characterized by a highly oxygenated pyrano-quinone bicyclic core and exhibiting a broad range of bioactivities. The first step of the pathway begins with the non-reducing polyketide synthase tazA that assembles one acetyl-CoA starter unit, five malonyl-CoA units, and catalyzes a series of Claisen condensations, methylation, PT-mediated cyclization, and finally releases the first hexaketide precursor through the R-domain. The tazA product then undergoes reduction on its terminal ketone and the following pyran-ring formation by yet undetermined enzyme(s). Dehydration and enoyl reduction, possibly involving the trans-enoyl reductase tazE leads to the next intermediate. TazD is predicted as an acetyltransferase and might catalyze the acetylation steps leading to the synthesis of azaterrilone A. Azaterrilone A is not the final product of the taz pathway and both the highly reducing polyketide synthase tazB and the dual enzyme tazHJ catalyze late steps of the pathway, leading to the production of the 2 final stereoisomers that contain additional polyketide modification whose structures have still to be determined. In Aspergillus terreus (strain NIH 2624 / FGSC A1156), this protein is Trans-enoyl reductase tazE.